Here is a 135-residue protein sequence, read N- to C-terminus: Large ribosomal subunit protein mL54 (135 aa).

It belongs to the mitochondrion-specific ribosomal protein mL54 family. Component of the mitochondrial ribosome large subunit (39S) which comprises a 16S rRNA and about 50 distinct proteins.

It localises to the mitochondrion. This is Large ribosomal subunit protein mL54 (mrpl54) from Danio rerio (Zebrafish).